Here is a 507-residue protein sequence, read N- to C-terminus: Cyclin-dependent kinase-like 2 (507 aa).

Positions 4–289 constitute a Protein kinase domain; it reads YENLGLVGEG…CADLLHHDFF (286 aa). Residues 10–18 and Lys33 each bind ATP; that span reads VGEGSYGMV. The [NKR]KIAxRE signature appears at 45 to 51; that stretch reads KKIAMRE. Catalysis depends on Asp126, which acts as the Proton acceptor. Positions 365 to 392 are disordered; sequence KTEKGTRASNGSCLHDNGTSHKGLSSTS.

Belongs to the protein kinase superfamily. CMGC Ser/Thr protein kinase family. CDC2/CDKX subfamily.

The protein localises to the cytoplasm. Its subcellular location is the nucleus. The catalysed reaction is L-seryl-[protein] + ATP = O-phospho-L-seryl-[protein] + ADP + H(+). The enzyme catalyses L-threonyl-[protein] + ATP = O-phospho-L-threonyl-[protein] + ADP + H(+). In Rattus norvegicus (Rat), this protein is Cyclin-dependent kinase-like 2.